Consider the following 299-residue polypeptide: Ribosomal RNA small subunit methyltransferase H (299 aa).

Residues 36–38, aspartate 55, aspartate 103, and glutamine 110 contribute to the S-adenosyl-L-methionine site; that span reads GGH. 2 stretches are compositionally biased toward basic and acidic residues: residues 268–282 and 289–299; these read KPVR…ENPR and RAAERIEKGGD. A disordered region spans residues 268 to 299; sequence KPVRPSEEEIRENPRARSGRLRAAERIEKGGD.

This sequence belongs to the methyltransferase superfamily. RsmH family.

It localises to the cytoplasm. The enzyme catalyses cytidine(1402) in 16S rRNA + S-adenosyl-L-methionine = N(4)-methylcytidine(1402) in 16S rRNA + S-adenosyl-L-homocysteine + H(+). Functionally, specifically methylates the N4 position of cytidine in position 1402 (C1402) of 16S rRNA. This Thermotoga sp. (strain RQ2) protein is Ribosomal RNA small subunit methyltransferase H.